The sequence spans 138 residues: Large ribosomal subunit protein uL16 (138 aa).

It belongs to the universal ribosomal protein uL16 family. Part of the 50S ribosomal subunit.

Its function is as follows. Binds 23S rRNA and is also seen to make contacts with the A and possibly P site tRNAs. This Chlamydia muridarum (strain MoPn / Nigg) protein is Large ribosomal subunit protein uL16.